A 218-amino-acid polypeptide reads, in one-letter code: Adenylate kinase (218 aa).

10-15 serves as a coordination point for ATP; it reads GAGKGT. Residues 30–59 form an NMP region; sequence STGDMLRAAVKAATPLGLAAKKIMDEGGLV. AMP contacts are provided by residues Thr-31, Arg-36, 57 to 59, 85 to 88, and Gln-92; these read GLV and GFPR. The tract at residues 122–159 is LID; the sequence is GRRVHLASGRTYHVTFNPPAVPDKDDLTGEPLVQRNDD. ATP contacts are provided by residues Arg-123 and 132–133; that span reads TY. AMP contacts are provided by Arg-156 and Arg-167. Gly-203 contacts ATP.

Belongs to the adenylate kinase family. In terms of assembly, monomer.

It localises to the cytoplasm. The catalysed reaction is AMP + ATP = 2 ADP. The protein operates within purine metabolism; AMP biosynthesis via salvage pathway; AMP from ADP: step 1/1. In terms of biological role, catalyzes the reversible transfer of the terminal phosphate group between ATP and AMP. Plays an important role in cellular energy homeostasis and in adenine nucleotide metabolism. The protein is Adenylate kinase of Chlorobaculum tepidum (strain ATCC 49652 / DSM 12025 / NBRC 103806 / TLS) (Chlorobium tepidum).